The following is a 176-amino-acid chain: Transcription factor E (176 aa).

Residues 8 to 90 (NDPVIQKYLH…LWTFHYENIP (83 aa)) form the HTH TFE/IIEalpha-type domain.

Belongs to the TFE family. As to quaternary structure, monomer. Interaction with RNA polymerase subunits RpoF and RpoE is necessary for Tfe stimulatory transcription activity. Able to interact with Tbp and RNA polymerase in the absence of DNA promoter. Interacts both with the preinitiation and elongation complexes.

In terms of biological role, transcription factor that plays a role in the activation of archaeal genes transcribed by RNA polymerase. Facilitates transcription initiation by enhancing TATA-box recognition by TATA-box-binding protein (Tbp), and transcription factor B (Tfb) and RNA polymerase recruitment. Not absolutely required for transcription in vitro, but particularly important in cases where Tbp or Tfb function is not optimal. It dynamically alters the nucleic acid-binding properties of RNA polymerases by stabilizing the initiation complex and destabilizing elongation complexes. Seems to translocate with the RNA polymerase following initiation and acts by binding to the non template strand of the transcription bubble in elongation complexes. This Haloquadratum walsbyi (strain DSM 16790 / HBSQ001) protein is Transcription factor E.